A 199-amino-acid polypeptide reads, in one-letter code: MEQQETIHISISEAAQTHFRRLLEQQEENTNIRIFVVNPGTPNAECGVSYCPPNAVEETDTQFEYNGFSAFVDEISLPFLDEAEIDYVTDPMGSQLTLKAPNAKMRKVADDAPFIERLDYVIQTQVNPQLASHGGRVTLIEVTEDKYAILQFGGGCNGCSMVDVTLKEGIEKQLLAMFPDELAGVKDVTEHQRGEHSYY.

[4Fe-4S] cluster-binding residues include cysteine 156 and cysteine 159.

Belongs to the NfuA family. As to quaternary structure, homodimer. Requires [4Fe-4S] cluster as cofactor.

Involved in iron-sulfur cluster biogenesis. Binds a 4Fe-4S cluster, can transfer this cluster to apoproteins, and thereby intervenes in the maturation of Fe/S proteins. Could also act as a scaffold/chaperone for damaged Fe/S proteins. This chain is Fe/S biogenesis protein NfuA, found in Actinobacillus pleuropneumoniae serotype 5b (strain L20).